Consider the following 620-residue polypeptide: Arginine--tRNA ligase (620 aa).

The 'HIGH' region motif lies at 147-157; it reads ANPTGPIHIGG.

This sequence belongs to the class-I aminoacyl-tRNA synthetase family. In terms of assembly, monomer.

The protein resides in the cytoplasm. The enzyme catalyses tRNA(Arg) + L-arginine + ATP = L-arginyl-tRNA(Arg) + AMP + diphosphate. The chain is Arginine--tRNA ligase from Bifidobacterium longum (strain DJO10A).